Consider the following 254-residue polypeptide: 30 kDa major early protein (254 aa).

The chain is 30 kDa major early protein from Human cytomegalovirus (strain Eisenhardt) (HHV-5).